Here is a 393-residue protein sequence, read N- to C-terminus: Sister chromatid cohesion protein DCC1 (393 aa).

Belongs to the DCC1 family. As to quaternary structure, component of the CTF18-RFC complex which consists of CTF8, CTF18, DSCC1 and the RFC complex. Interacts with CTF8 and CTF18. Interacts with DDX11.

The protein resides in the nucleus. In terms of biological role, loads PCNA onto primed templates regulating velocity, spacing and restart activity of replication forks. May couple DNA replication to sister chromatid cohesion through regulation of the acetylation of the cohesin subunit SMC3. The chain is Sister chromatid cohesion protein DCC1 (DSCC1) from Homo sapiens (Human).